The chain runs to 151 residues: NPC intracellular cholesterol transporter 2 (151 aa).

The N-terminal stretch at 1–19 is a signal peptide; the sequence is MRFLAATFLLLALSTAAQA. 3 disulfides stabilise this stretch: Cys-27/Cys-140, Cys-42/Cys-47, and Cys-93/Cys-99. The N-linked (GlcNAc...) asparagine glycan is linked to Asn-58. N6-acetyllysine is present on Lys-116. An N-linked (GlcNAc...) asparagine glycan is attached at Asn-135.

The protein belongs to the NPC2 family. As to quaternary structure, interacts with NPC1 (via the second lumenal domain) in a cholestrol-dependent manner. Interacts with NUS1/NgBR, the interaction stabilizes NCP2 and regulates cholesterol trafficking. Interacts with DHDDS. Interacts with NEDD4L (via C2 domain). Interacts with NPC1L1. Detected in gallbladder bile. Detected in fibroblasts, kidney, liver, spleen, small intestine, placenta and testis (at protein level). Epididymis.

The protein resides in the secreted. Its subcellular location is the endoplasmic reticulum. The protein localises to the lysosome. It carries out the reaction cholesterol(in) = cholesterol(out). Intracellular cholesterol transporter which acts in concert with NPC1 and plays an important role in the egress of cholesterol from the lysosomal compartment. Unesterified cholesterol that has been released from LDLs in the lumen of the late endosomes/lysosomes is transferred by NPC2 to the cholesterol-binding pocket in the N-terminal domain of NPC1. May bind and mobilize cholesterol that is associated with membranes. NPC2 binds cholesterol with a 1:1 stoichiometry. Can bind a variety of sterols, including lathosterol, desmosterol and the plant sterols stigmasterol and beta-sitosterol. The secreted form of NCP2 regulates biliary cholesterol secretion via stimulation of ABCG5/ABCG8-mediated cholesterol transport. This chain is NPC intracellular cholesterol transporter 2, found in Homo sapiens (Human).